The sequence spans 350 residues: tRNA N6-adenosine threonylcarbamoyltransferase (350 aa).

His109 and His113 together coordinate Fe cation. Substrate contacts are provided by residues 136-140 (TVSGG), Asp169, Gly182, Asp186, and Asn284. A Fe cation-binding site is contributed by Asp312.

This sequence belongs to the KAE1 / TsaD family. Fe(2+) serves as cofactor.

The protein resides in the cytoplasm. It catalyses the reaction L-threonylcarbamoyladenylate + adenosine(37) in tRNA = N(6)-L-threonylcarbamoyladenosine(37) in tRNA + AMP + H(+). Functionally, required for the formation of a threonylcarbamoyl group on adenosine at position 37 (t(6)A37) in tRNAs that read codons beginning with adenine. Is involved in the transfer of the threonylcarbamoyl moiety of threonylcarbamoyl-AMP (TC-AMP) to the N6 group of A37, together with TsaE and TsaB. TsaD likely plays a direct catalytic role in this reaction. This chain is tRNA N6-adenosine threonylcarbamoyltransferase, found in Chlorobium chlorochromatii (strain CaD3).